A 406-amino-acid polypeptide reads, in one-letter code: Tryptophan synthase beta chain (406 aa).

N6-(pyridoxal phosphate)lysine is present on Lys-99.

The protein belongs to the TrpB family. Tetramer of two alpha and two beta chains. The cofactor is pyridoxal 5'-phosphate.

The enzyme catalyses (1S,2R)-1-C-(indol-3-yl)glycerol 3-phosphate + L-serine = D-glyceraldehyde 3-phosphate + L-tryptophan + H2O. It participates in amino-acid biosynthesis; L-tryptophan biosynthesis; L-tryptophan from chorismate: step 5/5. Its function is as follows. The beta subunit is responsible for the synthesis of L-tryptophan from indole and L-serine. The sequence is that of Tryptophan synthase beta chain from Methylobacterium nodulans (strain LMG 21967 / CNCM I-2342 / ORS 2060).